Here is a 191-residue protein sequence, read N- to C-terminus: Guanylate kinase (191 aa).

The Guanylate kinase-like domain occupies 6 to 184; that stretch reads GLIIILSSPS…TIQQIHTIIL (179 aa). Residue 13-20 coordinates ATP; that stretch reads SPSGAGKS.

Belongs to the guanylate kinase family.

Its subcellular location is the cytoplasm. The enzyme catalyses GMP + ATP = GDP + ADP. In terms of biological role, essential for recycling GMP and indirectly, cGMP. The sequence is that of Guanylate kinase from Rickettsia bellii (strain RML369-C).